A 190-amino-acid polypeptide reads, in one-letter code: MKLISNILYVIIFTLIIVLTLVVISTRSSGGEPAVFGYTLKSVLSGSMEPEFNTGSLILVKEITDVKELQKGDVITFMQDANTAVTHRIVDITKQGDHLLFKTKGDNNAAADSAPVSDENVRAQYTGFQLPYAGYMLHFASQPIGTAVLLIVPGVMLLVYAFVTISSAIREIERKTKALETDTKDSTMST.

The chain crosses the membrane as a helical span at residues 4 to 24; the sequence is ISNILYVIIFTLIIVLTLVVI. The active site involves S45. Residues 143–163 traverse the membrane as a helical segment; sequence PIGTAVLLIVPGVMLLVYAFV.

The protein belongs to the peptidase S26B family.

Its subcellular location is the cell membrane. The enzyme catalyses Cleavage of hydrophobic, N-terminal signal or leader sequences from secreted and periplasmic proteins.. Functionally, required for the cleavage of the signal sequence of TasA and TapA, which are involved in biofilm formation. In Bacillus subtilis (strain 168), this protein is Signal peptidase I W.